The sequence spans 478 residues: Chromosomal replication initiator protein DnaA (478 aa).

The segment at 1–90 (MSVELWQQCV…KRSSAPRAVQ (90 aa)) is domain I, interacts with DnaA modulators. The segment at 91–141 (PASPPPAVVQAAPVAIEEASAARTVDAQPVAPATVRTERSVQVEGGLKHTS) is domain II. Residues 142–358 (YLNRAFTFEN…GALKRVIAHS (217 aa)) form a domain III, AAA+ region region. ATP is bound by residues G186, G188, K189, and T190. The segment at 359 to 478 (HFTNHPITIE…YKNLLRTLTT (120 aa)) is domain IV, binds dsDNA.

It belongs to the DnaA family. Oligomerizes as a right-handed, spiral filament on DNA at oriC.

The protein localises to the cytoplasm. Its function is as follows. Plays an essential role in the initiation and regulation of chromosomal replication. ATP-DnaA binds to the origin of replication (oriC) to initiate formation of the DNA replication initiation complex once per cell cycle. Binds the DnaA box (a 9 base pair repeat at the origin) and separates the double-stranded (ds)DNA. Forms a right-handed helical filament on oriC DNA; dsDNA binds to the exterior of the filament while single-stranded (ss)DNA is stabiized in the filament's interior. The ATP-DnaA-oriC complex binds and stabilizes one strand of the AT-rich DNA unwinding element (DUE), permitting loading of DNA polymerase. After initiation quickly degrades to an ADP-DnaA complex that is not apt for DNA replication. Binds acidic phospholipids. The chain is Chromosomal replication initiator protein DnaA from Azotobacter vinelandii (strain DJ / ATCC BAA-1303).